Here is a 317-residue protein sequence, read N- to C-terminus: 4-diphosphocytidyl-2-C-methyl-D-erythritol kinase (317 aa).

Lys11 is an active-site residue. 99-109 (PVAAGLAGGST) provides a ligand contact to ATP. The active site involves Asp141.

The protein belongs to the GHMP kinase family. IspE subfamily.

It carries out the reaction 4-CDP-2-C-methyl-D-erythritol + ATP = 4-CDP-2-C-methyl-D-erythritol 2-phosphate + ADP + H(+). It functions in the pathway isoprenoid biosynthesis; isopentenyl diphosphate biosynthesis via DXP pathway; isopentenyl diphosphate from 1-deoxy-D-xylulose 5-phosphate: step 3/6. Functionally, catalyzes the phosphorylation of the position 2 hydroxy group of 4-diphosphocytidyl-2C-methyl-D-erythritol. This is 4-diphosphocytidyl-2-C-methyl-D-erythritol kinase from Nostoc punctiforme (strain ATCC 29133 / PCC 73102).